The chain runs to 704 residues: Seven transmembrane domain-containing serine/threonine-protein kinase 2 (704 aa).

Topologically, residues 1-5 are extracellular; the sequence is MPSKE. Residues 6 to 26 traverse the membrane as a helical segment; it reads FIIPLILLCFYSVNGFVAVIS. The Cytoplasmic segment spans residues 27–42; it reads SLVELFIHKASWNSIK. Residues 43-63 traverse the membrane as a helical segment; the sequence is IFFYSLLILQCLCRCIIIGWG. Residues 64-76 are Extracellular-facing; that stretch reads MIETVQGGEFYSN. Residues 77 to 97 form a helical membrane-spanning segment; sequence FPSLLFISYAGLVALQMIQFL. Residues 98-121 lie on the Cytoplasmic side of the membrane; it reads PNDNQYLLLSEGKKNNHKVKVGTN. A helical transmembrane segment spans residues 122–142; sequence ILIFFNLFMYFGMFLLFGIAE. Topologically, residues 143 to 185 are extracellular; the sequence is KQVGNSTSFNHHGNHNSTTSTSTDEIPLVSTEVGELYLFGDKD. Asn-147 and Asn-158 each carry an N-linked (GlcNAc...) asparagine glycan. Residues 186–206 traverse the membrane as a helical segment; sequence PIYIVLDCFYFVCLLLLLIFH. The Cytoplasmic portion of the chain corresponds to 207–224; it reads SYVGWKTYKRNKDLFGIK. Residues 225–245 form a helical membrane-spanning segment; sequence LNVIHLILLICIFIRSLLVII. The Extracellular portion of the chain corresponds to 246-265; that stretch reads DPSSPNNSILHIDTESWLIY. The N-linked (GlcNAc...) asparagine glycan is linked to Asn-251. A helical membrane pass occupies residues 266–286; that stretch reads IYTISYYVVGEIIPGMLLIVI. The Cytoplasmic portion of the chain corresponds to 287–704; sequence EFLLPYHKRK…WSIEKDSSSK (418 aa). One can recognise a Protein kinase domain in the interval 317 to 682; it reads IAIHELLGMG…SLGVKFHLAN (366 aa). ATP contacts are provided by residues 323–331 and Lys-350; that span reads LGMGGSGAM. Residue Asp-506 is the Proton acceptor of the active site.

It belongs to the protein kinase superfamily. Ser/Thr protein kinase family.

The protein resides in the membrane. It carries out the reaction L-seryl-[protein] + ATP = O-phospho-L-seryl-[protein] + ADP + H(+). The enzyme catalyses L-threonyl-[protein] + ATP = O-phospho-L-threonyl-[protein] + ADP + H(+). The sequence is that of Seven transmembrane domain-containing serine/threonine-protein kinase 2 (7tmk2) from Dictyostelium discoideum (Social amoeba).